We begin with the raw amino-acid sequence, 407 residues long: Guanine nucleotide-binding protein alpha-1 subunit (407 aa).

Gly2 carries N-myristoyl glycine lipidation. The S-palmitoyl cysteine moiety is linked to residue Cys3. A G-alpha domain is found at 73-407 (NDIKVLLLGA…MSNNLQSLMF (335 aa)). Residues 76–89 (KVLLLGAGDSGKTT) are G1 motif. Asp84, Ser85, Gly86, Lys87, Thr88, Thr89, Asp190, Leu215, Thr221, Gly243, Asn309, Lys310, Asp312, and Ala380 together coordinate GTP. Residue Thr88 coordinates Mg(2+). The segment at 213–221 (DILHCRIKT) is G2 motif. Thr221 contacts Mg(2+). The segment at 236–245 (YRFFDVGGQR) is G3 motif. The tract at residues 305-312 (ILFLNKLD) is G4 motif. The segment at 378 to 383 (TTATDT) is G5 motif.

Belongs to the G-alpha family. G(q) subfamily. As to quaternary structure, g proteins are composed of 3 units; alpha, beta and gamma. The alpha chain contains the guanine nucleotide binding site. Mg(2+) serves as cofactor.

In terms of biological role, implicated in the mating and sporulation pathway. Probably coupled to mating-factor receptors. May act in concert with Ras1. This Schizosaccharomyces pombe (strain 972 / ATCC 24843) (Fission yeast) protein is Guanine nucleotide-binding protein alpha-1 subunit (gpa1).